Here is a 339-residue protein sequence, read N- to C-terminus: Undecaprenyl-phosphate 4-deoxy-4-formamido-L-arabinose transferase (339 aa).

Transmembrane regions (helical) follow at residues 235–255 and 269–289; these read LSLV…FLLV and LFVL…GMGL.

It belongs to the glycosyltransferase 2 family.

It is found in the cell inner membrane. It catalyses the reaction UDP-4-deoxy-4-formamido-beta-L-arabinose + di-trans,octa-cis-undecaprenyl phosphate = 4-deoxy-4-formamido-alpha-L-arabinopyranosyl di-trans,octa-cis-undecaprenyl phosphate + UDP. It functions in the pathway glycolipid biosynthesis; 4-amino-4-deoxy-alpha-L-arabinose undecaprenyl phosphate biosynthesis; 4-amino-4-deoxy-alpha-L-arabinose undecaprenyl phosphate from UDP-4-deoxy-4-formamido-beta-L-arabinose and undecaprenyl phosphate: step 1/2. It participates in bacterial outer membrane biogenesis; lipopolysaccharide biosynthesis. Its function is as follows. Catalyzes the transfer of 4-deoxy-4-formamido-L-arabinose from UDP to undecaprenyl phosphate. The modified arabinose is attached to lipid A and is required for resistance to polymyxin and cationic antimicrobial peptides. This is Undecaprenyl-phosphate 4-deoxy-4-formamido-L-arabinose transferase from Pseudomonas aeruginosa (strain LESB58).